The chain runs to 291 residues: Beta-lactamase CTX-M-15 (291 aa).

The first 28 residues, 1-28 (MVKKSLRQFTLMATATVTLLLGSVPLYA), serve as a signal peptide directing secretion. Ser-73 (nucleophile; acyl-ester intermediate) is an active-site residue. 4 residues coordinate a beta-lactam: Lys-76, Ser-133, Glu-169, and Ser-240.

Belongs to the class-A beta-lactamase family. In terms of assembly, monomer.

Its subcellular location is the secreted. It carries out the reaction a beta-lactam + H2O = a substituted beta-amino acid. Its activity is regulated as follows. Inhibited by the beta-lactamase-blocking agents clavulanic acid and avibactam, via a covalent binding to Ser-73. Extended-spectrum beta-lactamase (ESBL) which confers resistance to penicillins, as well as first, second, third and fourth-generation cephalosporins. Has cefotaxime- and ceftazidime-hydrolyzing activity. Inactive against the carbapenem antibiotics, imipenem, meropenem and ertapenem. The protein is Beta-lactamase CTX-M-15 of Escherichia coli O25b:H4.